The primary structure comprises 853 residues: Replication protein A 70 kDa DNA-binding subunit C (853 aa).

The tract at residues 118–282 (PKEPGHSSIN…QSAYQPQQPP (165 aa)) is disordered. 6 stretches are compositionally biased toward polar residues: residues 124-144 (SSIN…SEQQ), 159-173 (SANS…NSSD), 180-194 (SANS…SSSD), 201-211 (SANSPQRQVVH), 222-249 (PQVS…SSNA), and 263-278 (TATT…AYQP). A DNA-binding region (OB) is located at residues 312–399 (WTIKVRVTSK…NDYEIHLDSA (88 aa)). A C4-type zinc finger spans residues 602 to 628 (CPIMNGDRPCSKKVTNNGDGTWRCEKC).

This sequence belongs to the replication factor A protein 1 family. In terms of assembly, heterotrimer of RPA1, RPA2 and RPA3 (canonical replication protein A complex).

It is found in the nucleus. Functionally, component of the replication protein A complex (RPA) required for DNA recombination, repair and replication. The activity of RPA is mediated by single-stranded DNA binding and protein interactions. Probably involved in repair of double-strand DNA breaks (DSBs) induced by genotoxic stresses. This Arabidopsis thaliana (Mouse-ear cress) protein is Replication protein A 70 kDa DNA-binding subunit C (RPA1C).